A 369-amino-acid polypeptide reads, in one-letter code: Aminomethyltransferase (369 aa).

Belongs to the GcvT family. As to quaternary structure, the glycine cleavage system is composed of four proteins: P, T, L and H.

The catalysed reaction is N(6)-[(R)-S(8)-aminomethyldihydrolipoyl]-L-lysyl-[protein] + (6S)-5,6,7,8-tetrahydrofolate = N(6)-[(R)-dihydrolipoyl]-L-lysyl-[protein] + (6R)-5,10-methylene-5,6,7,8-tetrahydrofolate + NH4(+). Its function is as follows. The glycine cleavage system catalyzes the degradation of glycine. The sequence is that of Aminomethyltransferase from Xanthomonas axonopodis pv. citri (strain 306).